The sequence spans 428 residues: AP-1 complex subunit mu-2 (428 aa).

The region spanning 170–426 is the MHD domain; the sequence is KNEVFLDVIE…ITMAGEYELR (257 aa).

It belongs to the adaptor complexes medium subunit family. In terms of assembly, adaptor protein complex 1 (AP-1) is a heterotetramer composed of two large adaptins (gamma-type subunit and beta-type subunit), a medium adaptin (mu-type subunit) and a small adaptin (sigma-type subunit). As to expression, ubiquitous.

The protein resides in the golgi apparatus. It localises to the trans-Golgi network membrane. The protein localises to the early endosome membrane. Its subcellular location is the cytoplasmic vesicle. It is found in the clathrin-coated vesicle membrane. Its function is as follows. Subunit of clathrin-associated adaptor protein complex 1 that plays a role in protein sorting at the trans-Golgi network and early endosomes (TGN/EE). The AP complexes mediate the recruitment of clathrin to membranes and the recognition of sorting signals within the cytosolic tails of transmembrane cargo molecules. Required for KNOLLE localization at the cell plate to mediate cytokinesis. Functions redundantly with AP1M1 in multiple post-Golgi trafficking pathways leading from the TGN to the vacuole, the plasma membrane, and the cell-division plane. This chain is AP-1 complex subunit mu-2 (AP1M2), found in Arabidopsis thaliana (Mouse-ear cress).